Consider the following 1958-residue polypeptide: Probable Rho GTPase-activating protein CG5521 (1958 aa).

Disordered stretches follow at residues 1-21 (MFTK…QDSK), 400-424 (PPFL…RSQR), and 635-804 (GSVW…GIEG). The segment covering 400 to 414 (PPFLLEPNDDPPPPS) has biased composition (pro residues). The segment covering 640 to 656 (GSGSNSAANGGSAASAA) has biased composition (low complexity). 3 positions are modified to phosphoserine: Ser-718, Ser-764, and Ser-767. A compositionally biased stretch (basic and acidic residues) spans 758–774 (DLRRAMSLDSLARKGDA). A compositionally biased stretch (acidic residues) spans 775 to 785 (EETDSYQEGDN). Residues Ser-787, Ser-791, Ser-793, and Ser-795 each carry the phosphoserine modification. Over residues 788–800 (GAGSRSPSPTASS) the composition is skewed to polar residues. Tyr-980 bears the Phosphotyrosine mark. Residues 1534–1568 (HSTQAPSPALRHASSNSSLQQPDQRSLHSTTASFD) form a disordered region. Over residues 1546 to 1568 (ASSNSSLQQPDQRSLHSTTASFD) the composition is skewed to polar residues. The residue at position 1551 (Ser-1551) is a Phosphoserine. Residues 1612–1819 (LRNVDLQKCR…EERNRSLDSV (208 aa)) form the Rap-GAP domain. Positions 1903–1958 (ATGMSSASPRGPRKLGAPFKSVTKKHSLQHIAVGGGAGAGGDTPPESPTLPQRRFK) are disordered. Thr-1945 is modified (phosphothreonine). Ser-1949 bears the Phosphoserine mark.

This is Probable Rho GTPase-activating protein CG5521 from Drosophila melanogaster (Fruit fly).